The primary structure comprises 661 residues: uncharacterized protein (661 aa).

Transmembrane regions (helical) follow at residues 37–57 (VFLG…LFLS), 87–107 (INSP…AVFI), 120–140 (WLLL…NVIL), 158–178 (VFWQ…PIIV), 243–263 (LLDI…LYTI), 266–286 (TLMW…IAIG), and 341–361 (FNLL…YNYF). Positions 123–410 (LGVLLSLLFV…VTNQIQNITE (288 aa)) constitute an ABC transmembrane type-1 domain. An ABC transporter domain is found at 453 to 659 (VALENVTLSP…AEGRWQISPI (207 aa)). 487-494 (GPSGSGKS) lines the ATP pocket.

The protein belongs to the ABC transporter superfamily.

The protein localises to the cell inner membrane. This is an uncharacterized protein from Synechocystis sp. (strain ATCC 27184 / PCC 6803 / Kazusa).